A 318-amino-acid polypeptide reads, in one-letter code: Phosphoenolpyruvate transferase (318 aa).

Position 50 (D50) interacts with 7,8-didemethyl-8-hydroxy-5-deazariboflavin.

The protein belongs to the CofD family. As to quaternary structure, homodimer. Mg(2+) serves as cofactor.

It carries out the reaction enolpyruvoyl-2-diphospho-5'-guanosine + 7,8-didemethyl-8-hydroxy-5-deazariboflavin = dehydro coenzyme F420-0 + GMP + H(+). It functions in the pathway cofactor biosynthesis; coenzyme F420 biosynthesis. Its function is as follows. Catalyzes the transfer of the phosphoenolpyruvate moiety from enoylpyruvoyl-2-diphospho-5'-guanosine (EPPG) to 7,8-didemethyl-8-hydroxy-5-deazariboflavin (FO) with the formation of dehydro coenzyme F420-0 and GMP. The sequence is that of Phosphoenolpyruvate transferase from Streptomyces griseus subsp. griseus (strain JCM 4626 / CBS 651.72 / NBRC 13350 / KCC S-0626 / ISP 5235).